A 325-amino-acid chain; its full sequence is Casein kinase I isoform alpha (325 aa).

Alanine 2 is subject to N-acetylalanine. Position 4 is a phosphoserine (serine 4). N6-acetyllysine is present on lysine 8. The region spanning 17 to 285 (YKLVRKIGSG…YLRQLFRILF (269 aa)) is the Protein kinase domain. Residues 23 to 31 (IGSGSFGDI) and lysine 46 contribute to the ATP site. Residue aspartate 136 is the Proton acceptor of the active site. The residue at position 156 (isoleucine 156) is a Phosphoserine.

Belongs to the protein kinase superfamily. CK1 Ser/Thr protein kinase family. Casein kinase I subfamily. In terms of assembly, interacts with the Axin complex. Interacts with TUT1, leading to TUT1 phosphorylation. Interacts with FAM83A, FAM83B, FAM83C, FAM83D, FAM83E, FAM83F, FAM83G and FAM83H (via DUF1669). Interaction with FAM83H recruits CSNK1A1 to keratin filaments. Phosphorylated by MTOR in response to mitogenic stimulation, leading to its activation.

It localises to the cytoplasm. It is found in the cytoskeleton. The protein localises to the microtubule organizing center. Its subcellular location is the centrosome. The protein resides in the chromosome. It localises to the centromere. It is found in the kinetochore. The protein localises to the nucleus speckle. Its subcellular location is the cilium basal body. The protein resides in the spindle. The enzyme catalyses L-seryl-[protein] + ATP = O-phospho-L-seryl-[protein] + ADP + H(+). The catalysed reaction is L-threonyl-[protein] + ATP = O-phospho-L-threonyl-[protein] + ADP + H(+). Functionally, casein kinases are operationally defined by their preferential utilization of acidic proteins such as caseins as substrates. Can phosphorylate a large number of proteins. Participates in Wnt signaling. Phosphorylates CTNNB1 at 'Ser-45'. May phosphorylate PER1 and PER2. May play a role in segregating chromosomes during mitosis. May play a role in keratin cytoskeleton disassembly and thereby, it may regulate epithelial cell migration. Acts as a positive regulator of mTORC1 and mTORC2 signaling in response to nutrients by mediating phosphorylation of DEPTOR inhibitor. Acts as an inhibitor of NLRP3 inflammasome assembly by mediating phosphorylation of NLRP3. This Rattus norvegicus (Rat) protein is Casein kinase I isoform alpha (Csnk1a1).